The following is a 175-amino-acid chain: Protein CENTRORADIALIS-like (175 aa).

Belongs to the phosphatidylethanolamine-binding protein family. In terms of tissue distribution, expressed in tissues surrounding vascular bundles in hypocotyl of 2-week-old plants.

It is found in the cytoplasm. May form complexes with phosphorylated ligands by interfering with kinases and their effectors. Can substitute for TERMINAL FLOWER 1 (in vitro). The chain is Protein CENTRORADIALIS-like (CEN) from Arabidopsis thaliana (Mouse-ear cress).